Reading from the N-terminus, the 436-residue chain is ATP-dependent protease ATPase subunit HslU (436 aa).

ATP-binding positions include isoleucine 18, 60–65 (GVGKTE), aspartate 250, glutamate 314, and arginine 386.

It belongs to the ClpX chaperone family. HslU subfamily. As to quaternary structure, a double ring-shaped homohexamer of HslV is capped on each side by a ring-shaped HslU homohexamer. The assembly of the HslU/HslV complex is dependent on binding of ATP.

The protein localises to the cytoplasm. Functionally, ATPase subunit of a proteasome-like degradation complex; this subunit has chaperone activity. The binding of ATP and its subsequent hydrolysis by HslU are essential for unfolding of protein substrates subsequently hydrolyzed by HslV. HslU recognizes the N-terminal part of its protein substrates and unfolds these before they are guided to HslV for hydrolysis. In Mesorhizobium japonicum (strain LMG 29417 / CECT 9101 / MAFF 303099) (Mesorhizobium loti (strain MAFF 303099)), this protein is ATP-dependent protease ATPase subunit HslU.